Reading from the N-terminus, the 638-residue chain is Chaperone protein DnaK (638 aa).

Phosphothreonine; by autocatalysis is present on threonine 196. The tract at residues 592 to 638 is disordered; that stretch reads ASNLYQQPGAEAGAAPQPETNGQQESKGGDGAVNAEYEVIDGDDDKK. Low complexity predominate over residues 597–610; sequence QQPGAEAGAAPQPE. Acidic residues predominate over residues 629 to 638; the sequence is EVIDGDDDKK.

The protein belongs to the heat shock protein 70 family.

Acts as a chaperone. The sequence is that of Chaperone protein DnaK from Chlorobaculum parvum (strain DSM 263 / NCIMB 8327) (Chlorobium vibrioforme subsp. thiosulfatophilum).